Reading from the N-terminus, the 318-residue chain is Ribosomal RNA small subunit methyltransferase A (318 aa).

S-adenosyl-L-methionine-binding residues include Asn40, Val42, Gly67, Glu88, Asp118, and Asn137. Positions 296–305 are enriched in basic and acidic residues; it reads ADRGGSDREG. The segment at 296-318 is disordered; that stretch reads ADRGGSDREGTSPPTAGQGAPAC.

The protein belongs to the class I-like SAM-binding methyltransferase superfamily. rRNA adenine N(6)-methyltransferase family. RsmA subfamily.

The protein localises to the cytoplasm. It catalyses the reaction adenosine(1518)/adenosine(1519) in 16S rRNA + 4 S-adenosyl-L-methionine = N(6)-dimethyladenosine(1518)/N(6)-dimethyladenosine(1519) in 16S rRNA + 4 S-adenosyl-L-homocysteine + 4 H(+). Functionally, specifically dimethylates two adjacent adenosines (A1518 and A1519) in the loop of a conserved hairpin near the 3'-end of 16S rRNA in the 30S particle. May play a critical role in biogenesis of 30S subunits. The chain is Ribosomal RNA small subunit methyltransferase A from Mycobacterium avium (strain 104).